An 816-amino-acid chain; its full sequence is Probable transcriptional regulator SLK2 (816 aa).

Disordered stretches follow at residues 133 to 153 (HDPS…SQTN) and 166 to 189 (SFFQ…KQDD). Composition is skewed to polar residues over residues 139-153 (LGGS…SQTN) and 166-176 (SFFQDPNNLTQ). The tract at residues 307-554 (PSESSIVYWR…DQKVGPIEAL (248 aa)) is dimerization. The short motif at 316 to 330 (RKFVTEYFSPRAKKR) is the Nuclear localization signal element. 2 stretches are compositionally biased toward polar residues: residues 644–662 (IQQE…QGTS) and 672–711 (PSIS…SGNQ). The segment at 644–711 (IQQEPSRNRS…QPPSCSSGNQ (68 aa)) is disordered.

It belongs to the adn1/SEU family. Forms corepressor complexes with LUH; LUH is the transcription repressor subunit and SLK2 the specific DNA-binding adapters. In terms of tissue distribution, expressed in young flower meristems, ovules and the carpel margin meristem.

The protein resides in the nucleus. In terms of biological role, probable transcription regulator that functions in the development of the carpel margin meristem similarly to SEUSS (SEU). In association with SEU, supports organ development from meristematic regions by facilitating auxin response and thus organ initiation, and by sustaining meristematic potential through the maintenance of PHABULOSA expression. DNA-binding adapter subunit of the SEU-SLK2 transcriptional corepressor of abiotic stress (e.g. salt and osmotic stress) response genes. This Arabidopsis thaliana (Mouse-ear cress) protein is Probable transcriptional regulator SLK2 (SLK2).